The chain runs to 605 residues: MAALATSQLVATRAGLGVPDASTFRRGAAQGLRGARASAAADTLSMRTSARAAPRHQQQARRGGRFPSLVVCASAGMNVVFVGAEMAPWSKTGGLGDVLGGLPPAMAANGHRVMVVSPRYDQYKDAWDTSVVSEIKMGDGYETVRFFHCYKRGVDRVFVDHPLFLERVWGKTEEKIYGPVAGTDYRDNQLRFSLLCQAALEAPRILSLNNNPYFSGPYGEDVVFVCNDWHTGPLSCYLKSNYQSHGIYRDAKTAFCIHNISYQGRFAFSDYPELNLPERFKSSFDFIDGYEKPVEGRKINWMKAGILEADRVLTVSPYYAEELISGIARGCELDNIMRLTGITGIVNGMDVSEWDPSRDKYIAVKYDVSTAVEAKALNKEALQAEVGLPVDRNIPLVAFIGRLEEQKGPDVMAAAIPQLMEMVEDVQIVLLGTGKKKFERMLMSAEEKFPGKVRAVVKFNAALAHHIMAGADVLAVTSRFEPCGLIQLQGMRYGTPCACASTGGLVDTIIEGKTGFHMGRLSVDCNVVEPADVKKVATTLQRAIKVVGTPAYEEMVRNCMIQDLSWKGPAKNWENVLLSLGVAGGEPGVEGEEIAPLAKENVAAP.

The N-terminal 72 residues, 1–72, are a transit peptide targeting the chloroplast; the sequence is MAALATSQLV…GGRFPSLVVC (72 aa). Lys91 is a binding site for ADP-alpha-D-glucose.

This sequence belongs to the glycosyltransferase 1 family. Bacterial/plant glycogen synthase subfamily.

Its subcellular location is the plastid. It localises to the chloroplast. The protein localises to the amyloplast. It carries out the reaction an NDP-alpha-D-glucose + [(1-&gt;4)-alpha-D-glucosyl](n) = [(1-&gt;4)-alpha-D-glucosyl](n+1) + a ribonucleoside 5'-diphosphate + H(+). Its pathway is glycan biosynthesis; starch biosynthesis. In terms of biological role, required for the synthesis of amylose in endosperm. The chain is Granule-bound starch synthase 1, chloroplastic/amyloplastic (WAXY) from Zea mays (Maize).